We begin with the raw amino-acid sequence, 877 residues long: ABC transporter A family member 1 (877 aa).

7 consecutive transmembrane segments (helical) span residues 46–66 (YFSTGIEILSPIAFIIILFLI), 268–288 (VWGGLFYYCGSMISFIFLLYK), 324–344 (ILISLITIIVGLACQLPFFLG), 347–367 (FFVLIITFSLFTISMSSVAFF), 379–399 (IGIGMGIFIVGSIFQLVFSGM), 420–440 (IILFFIPMFHFTKVLTDIGNV), and 479–499 (LLALIGVYTVLAWYFEHIIPG). Residues 552 to 788 (LIICGLSKSY…YGEGYSVNIV (237 aa)) enclose the ABC transporter domain. ATP is bound at residue 591–598 (GSNGCGKS).

This sequence belongs to the ABC transporter superfamily. ABCA family.

It is found in the membrane. The chain is ABC transporter A family member 1 (abcA1) from Dictyostelium discoideum (Social amoeba).